The following is a 271-amino-acid chain: Formamidopyrimidine-DNA glycosylase (271 aa).

The active-site Schiff-base intermediate with DNA is proline 2. Glutamate 3 serves as the catalytic Proton donor. Lysine 58 acts as the Proton donor; for beta-elimination activity in catalysis. DNA is bound by residues histidine 91, arginine 110, and arginine 152. The segment at 237-271 (SVYGRNDAPCPGCGAPIRRSRQGGRSTYFCDRCQH) adopts an FPG-type zinc-finger fold. Residue arginine 261 is the Proton donor; for delta-elimination activity of the active site.

Belongs to the FPG family. Monomer. Requires Zn(2+) as cofactor.

The enzyme catalyses Hydrolysis of DNA containing ring-opened 7-methylguanine residues, releasing 2,6-diamino-4-hydroxy-5-(N-methyl)formamidopyrimidine.. It catalyses the reaction 2'-deoxyribonucleotide-(2'-deoxyribose 5'-phosphate)-2'-deoxyribonucleotide-DNA = a 3'-end 2'-deoxyribonucleotide-(2,3-dehydro-2,3-deoxyribose 5'-phosphate)-DNA + a 5'-end 5'-phospho-2'-deoxyribonucleoside-DNA + H(+). In terms of biological role, involved in base excision repair of DNA damaged by oxidation or by mutagenic agents. Acts as a DNA glycosylase that recognizes and removes damaged bases. Has a preference for oxidized purines, such as 7,8-dihydro-8-oxoguanine (8-oxoG). Has AP (apurinic/apyrimidinic) lyase activity and introduces nicks in the DNA strand. Cleaves the DNA backbone by beta-delta elimination to generate a single-strand break at the site of the removed base with both 3'- and 5'-phosphates. In Geotalea uraniireducens (strain Rf4) (Geobacter uraniireducens), this protein is Formamidopyrimidine-DNA glycosylase.